Here is a 154-residue protein sequence, read N- to C-terminus: Aspartate carbamoyltransferase regulatory chain (154 aa).

C109, C114, C138, and C141 together coordinate Zn(2+).

This sequence belongs to the PyrI family. In terms of assembly, contains catalytic and regulatory chains. Zn(2+) serves as cofactor.

In terms of biological role, involved in allosteric regulation of aspartate carbamoyltransferase. In Sodalis glossinidius (strain morsitans), this protein is Aspartate carbamoyltransferase regulatory chain.